Here is a 662-residue protein sequence, read N- to C-terminus: UvrABC system protein B (662 aa).

The 390-residue stretch at 25–414 (AGLNSKKRSQ…GTVVELIIRP (390 aa)) folds into the Helicase ATP-binding domain. 38–45 (GITGSGKT) is an ATP binding site. The Beta-hairpin signature appears at 91–114 (YYDYYQPEAYIVRTDTFIEKDSSI). The Helicase C-terminal domain occupies 430–592 (QVEDLISEIQ…IIPKTINSAI (163 aa)). Residues 622–657 (KSYMDKLKKEMFKAASNLEFEQAAKLRNQLKTLEKA) enclose the UVR domain.

This sequence belongs to the UvrB family. Forms a heterotetramer with UvrA during the search for lesions. Interacts with UvrC in an incision complex.

The protein resides in the cytoplasm. Functionally, the UvrABC repair system catalyzes the recognition and processing of DNA lesions. A damage recognition complex composed of 2 UvrA and 2 UvrB subunits scans DNA for abnormalities. Upon binding of the UvrA(2)B(2) complex to a putative damaged site, the DNA wraps around one UvrB monomer. DNA wrap is dependent on ATP binding by UvrB and probably causes local melting of the DNA helix, facilitating insertion of UvrB beta-hairpin between the DNA strands. Then UvrB probes one DNA strand for the presence of a lesion. If a lesion is found the UvrA subunits dissociate and the UvrB-DNA preincision complex is formed. This complex is subsequently bound by UvrC and the second UvrB is released. If no lesion is found, the DNA wraps around the other UvrB subunit that will check the other stand for damage. This Rickettsia typhi (strain ATCC VR-144 / Wilmington) protein is UvrABC system protein B.